Here is a 421-residue protein sequence, read N- to C-terminus: tRNA(Ile)-lysidine synthase (421 aa).

26–31 (SGGADS) contacts ATP.

Belongs to the tRNA(Ile)-lysidine synthase family.

It is found in the cytoplasm. The catalysed reaction is cytidine(34) in tRNA(Ile2) + L-lysine + ATP = lysidine(34) in tRNA(Ile2) + AMP + diphosphate + H(+). Its function is as follows. Ligates lysine onto the cytidine present at position 34 of the AUA codon-specific tRNA(Ile) that contains the anticodon CAU, in an ATP-dependent manner. Cytidine is converted to lysidine, thus changing the amino acid specificity of the tRNA from methionine to isoleucine. The chain is tRNA(Ile)-lysidine synthase from Streptococcus thermophilus (strain CNRZ 1066).